The chain runs to 610 residues: Zinc finger protein 823 (610 aa).

The KRAB domain maps to 4-97; the sequence is VAFEDVAVNF…VNKNTPRVNP (94 aa). C2H2-type zinc fingers lie at residues 164–186, 192–214, 220–242, 248–270, 276–298, 304–326, 332–354, 360–382, 388–410, and 416–438; these read FDCK…MAAH, YKCK…ERTH, YECK…ERIH, YECK…ERTH, YKCT…ERTH, YACK…MIRH, HKCK…ETTH, YECK…MITH, QKCK…ERTH, and YQCK…EATH. The C2H2-type 11; atypical zinc-finger motif lies at 444-465; sequence YKCQCGKAFSDLSSFQNHETTH. 5 consecutive C2H2-type zinc fingers follow at residues 471 to 493, 499 to 521, 527 to 549, 555 to 577, and 583 to 605; these read YECK…KRTH, YECK…ERIH, and YECL…EKTH.

It belongs to the krueppel C2H2-type zinc-finger protein family.

The protein resides in the nucleus. In terms of biological role, may be involved in transcriptional regulation. This Homo sapiens (Human) protein is Zinc finger protein 823 (ZNF823).